An 88-amino-acid chain; its full sequence is Cuticle protein 70, isoforms A and B (88 aa).

5 consecutive repeat copies span residues 7–10, 48–51, 55–58, 60–63, and 66–69.

Its function is as follows. Component of the cuticle of migratory locust which contains more than 100 different structural proteins. The polypeptide is Cuticle protein 70, isoforms A and B (Locusta migratoria (Migratory locust)).